Reading from the N-terminus, the 261-residue chain is Cytochrome c oxidase subunit 3 (261 aa).

At 1–15 (MTHQTHAYHMVNPSP) the chain is on the mitochondrial matrix side. Residues 16–34 (WPLTGALSALLMTSGLIMW) traverse the membrane as a helical segment. The Mitochondrial intermembrane portion of the chain corresponds to 35 to 40 (FHFNSM). Residues 41-66 (YLLMLGLTTNTLTMYQWWRDIVREST) traverse the membrane as a helical segment. Residues 67–72 (FQGHHT) lie on the Mitochondrial matrix side of the membrane. Residues 73–105 (PIVQKGLRYGMILFIVSEVFFFAGFFWAFYHSS) traverse the membrane as a helical segment. Over 106 to 128 (LAPTPELGGCWPPTGITPLNPME) the chain is Mitochondrial intermembrane. The helical transmembrane segment at 129 to 152 (VPLLNTSVLLASGVSITWAHHSLM) threads the bilayer. At 153–155 (EGN) the chain is on the mitochondrial matrix side. A helical membrane pass occupies residues 156-183 (RKHMLQALFITISLGVYFTLLQASEYYE). Over 184-190 (TPFTISD) the chain is Mitochondrial intermembrane. Residues 191–223 (GIYGSTFFMATGFHGLHVIIGSTFLIVCFMRQL) traverse the membrane as a helical segment. The Mitochondrial matrix portion of the chain corresponds to 224–232 (KFHFTSNHH). A helical transmembrane segment spans residues 233–256 (FGFEAAAWYWHFVDVVWLFLYVSI). Residues 257–261 (YWWGS) lie on the Mitochondrial intermembrane side of the membrane.

The protein belongs to the cytochrome c oxidase subunit 3 family. In terms of assembly, component of the cytochrome c oxidase (complex IV, CIV), a multisubunit enzyme composed of 14 subunits. The complex is composed of a catalytic core of 3 subunits MT-CO1, MT-CO2 and MT-CO3, encoded in the mitochondrial DNA, and 11 supernumerary subunits COX4I, COX5A, COX5B, COX6A, COX6B, COX6C, COX7A, COX7B, COX7C, COX8 and NDUFA4, which are encoded in the nuclear genome. The complex exists as a monomer or a dimer and forms supercomplexes (SCs) in the inner mitochondrial membrane with NADH-ubiquinone oxidoreductase (complex I, CI) and ubiquinol-cytochrome c oxidoreductase (cytochrome b-c1 complex, complex III, CIII), resulting in different assemblies (supercomplex SCI(1)III(2)IV(1) and megacomplex MCI(2)III(2)IV(2)).

It is found in the mitochondrion inner membrane. It catalyses the reaction 4 Fe(II)-[cytochrome c] + O2 + 8 H(+)(in) = 4 Fe(III)-[cytochrome c] + 2 H2O + 4 H(+)(out). Its function is as follows. Component of the cytochrome c oxidase, the last enzyme in the mitochondrial electron transport chain which drives oxidative phosphorylation. The respiratory chain contains 3 multisubunit complexes succinate dehydrogenase (complex II, CII), ubiquinol-cytochrome c oxidoreductase (cytochrome b-c1 complex, complex III, CIII) and cytochrome c oxidase (complex IV, CIV), that cooperate to transfer electrons derived from NADH and succinate to molecular oxygen, creating an electrochemical gradient over the inner membrane that drives transmembrane transport and the ATP synthase. Cytochrome c oxidase is the component of the respiratory chain that catalyzes the reduction of oxygen to water. Electrons originating from reduced cytochrome c in the intermembrane space (IMS) are transferred via the dinuclear copper A center (CU(A)) of subunit 2 and heme A of subunit 1 to the active site in subunit 1, a binuclear center (BNC) formed by heme A3 and copper B (CU(B)). The BNC reduces molecular oxygen to 2 water molecules using 4 electrons from cytochrome c in the IMS and 4 protons from the mitochondrial matrix. This Halichoerus grypus (Gray seal) protein is Cytochrome c oxidase subunit 3 (MT-CO3).